The following is a 500-amino-acid chain: Cytochrome P450 2D20 (500 aa).

Cys446 is a binding site for heme.

The protein belongs to the cytochrome P450 family. It depends on heme as a cofactor.

It localises to the endoplasmic reticulum membrane. Its subcellular location is the microsome membrane. In Mesocricetus auratus (Golden hamster), this protein is Cytochrome P450 2D20 (CYP2D20).